Here is a 325-residue protein sequence, read N- to C-terminus: NADH-quinone oxidoreductase subunit H (325 aa).

A run of 8 helical transmembrane segments spans residues V11 to L31, M81 to V101, I114 to G134, A149 to A169, M186 to V206, F237 to F257, L265 to I285, and I304 to A324.

It belongs to the complex I subunit 1 family. NDH-1 is composed of 13 different subunits. Subunits NuoA, H, J, K, L, M, N constitute the membrane sector of the complex.

It localises to the cell inner membrane. It carries out the reaction a quinone + NADH + 5 H(+)(in) = a quinol + NAD(+) + 4 H(+)(out). Functionally, NDH-1 shuttles electrons from NADH, via FMN and iron-sulfur (Fe-S) centers, to quinones in the respiratory chain. The immediate electron acceptor for the enzyme in this species is believed to be ubiquinone. Couples the redox reaction to proton translocation (for every two electrons transferred, four hydrogen ions are translocated across the cytoplasmic membrane), and thus conserves the redox energy in a proton gradient. This subunit may bind ubiquinone. The protein is NADH-quinone oxidoreductase subunit H of Photorhabdus laumondii subsp. laumondii (strain DSM 15139 / CIP 105565 / TT01) (Photorhabdus luminescens subsp. laumondii).